The following is a 195-amino-acid chain: MPKLGMQSIRRRQLIDATLEAINEVGMHDATIAQIARRAGVSTGIISHYFRDKNGLLEATMRDITSQLRDAVLNRLHALPQGSAEQRLQAIVGGNFDETQVSSAAMKAWLAFWASSMHQPMLYRLQQVSSRRLLSNLVSEFRRELPRHQAQEAGYGLAALIDGLWLRAALSGKPLDKPLAHSLTRHFITQHLPTD.

The region spanning 8–68 is the HTH tetR-type domain; the sequence is SIRRRQLIDA…ATMRDITSQL (61 aa). Residues 31 to 50 constitute a DNA-binding region (H-T-H motif); sequence TIAQIARRAGVSTGIISHYF.

It functions in the pathway amine and polyamine biosynthesis; betaine biosynthesis via choline pathway [regulation]. Its function is as follows. Repressor involved in the biosynthesis of the osmoprotectant glycine betaine. It represses transcription of the choline transporter BetT and the genes of BetAB involved in the synthesis of glycine betaine. The sequence is that of HTH-type transcriptional regulator BetI from Escherichia coli O157:H7.